The primary structure comprises 255 residues: High-affinity branched-chain amino acid transport ATP-binding protein LivG (255 aa).

The region spanning 6 to 254 is the ABC transporter domain; it reads LAVNGLMMRF…PDVIRAYLGE (249 aa). ATP is bound at residue 38–45; sequence GPNGAGKT.

Belongs to the ABC transporter superfamily.

In terms of biological role, component of the high-affinity branched-chain amino acid transport system. This is High-affinity branched-chain amino acid transport ATP-binding protein LivG (livG) from Salmonella typhi.